Here is a 2236-residue protein sequence, read N- to C-terminus: uncharacterized protein (2236 aa).

Spectrin repeat units lie at residues 46–146 and 238–335; these read QVYL…RQLE and QKFV…TDIE. 2 coiled-coil regions span residues 496-541 and 603-631; these read VVEQ…TVNS and DDQQ…VGRQ. Spectrin repeat units follow at residues 839-949, 1048-1146, 1261-1361, 1367-1459, and 1562-1667; these read YEYD…KTLK, KKLE…KRME, LGAE…VDLN, ILID…KSLA, and QKVV…NRLE. Positions 1835-1869 form a coiled coil; sequence QNSTDAEKKLSLVSERLNALKKQLDLLAEKIAVDD. EF-hand domains are found at residues 2104–2139 and 2141–2176; these read KQLH…QGYN and SAEN…HETT. The Ca(2+) site is built by aspartate 2154, serine 2156, threonine 2158, histidine 2160, and aspartate 2165.

It belongs to the spectrin family.

This is an uncharacterized protein from Caenorhabditis elegans.